A 67-amino-acid polypeptide reads, in one-letter code: Alpha-conotoxin-like Pu1.1 (67 aa).

Positions 1–21 are cleaved as a signal peptide; sequence MGMRMMFTVFLLVVLATTVVS. The propeptide occupies 22–46; sequence FTSDRTSDGRNAAFNAFDLIALTAR. A Pyrrolidone carboxylic acid modification is found at Q47. 2 cysteine pairs are disulfide-bonded: C49–C55 and C50–C63. The interval 51 to 53 is lacks the Ser-Xaa-Pro motif that is crucial for potent interaction with nAChR; that stretch reads NVP. Position 63 is a cysteine amide (C63).

This sequence belongs to the conotoxin A superfamily. In terms of tissue distribution, expressed by the venom duct.

Its subcellular location is the secreted. Its function is as follows. Alpha-conotoxins act on postsynaptic membranes, they bind to the nicotinic acetylcholine receptors (nAChR) and thus inhibit them. Has possibly a distinct nAChR binding mode from other alpha-conotoxins, due to a different three residue motif (lacks the Ser-Xaa-Pro motif). The sequence is that of Alpha-conotoxin-like Pu1.1 from Conus pulicarius (Flea-bitten cone).